Consider the following 209-residue polypeptide: Large ribosomal subunit protein uL3 (209 aa).

Residues 133–152 (THGNSLSHRVPGSIGQNQTP) are disordered. Glutamine 150 is subject to N5-methylglutamine.

Belongs to the universal ribosomal protein uL3 family. In terms of assembly, part of the 50S ribosomal subunit. Forms a cluster with proteins L14 and L19. Methylated by PrmB.

One of the primary rRNA binding proteins, it binds directly near the 3'-end of the 23S rRNA, where it nucleates assembly of the 50S subunit. The polypeptide is Large ribosomal subunit protein uL3 (Sodalis glossinidius (strain morsitans)).